The sequence spans 378 residues: Response regulator aspartate phosphatase A (378 aa).

6 TPR repeats span residues 101-137, 148-181, 183-215, 222-255, 261-294, and 336-369; these read YYFN…VSDD, AEIF…TVRR, QCEF…AKKE, SSAL…CKSE, PHSI…ARQY, and EELA…QKQI.

This sequence belongs to the Rap family. In terms of assembly, homodimer. Interacts with its substrate, phosphorylated Spo0F, and its inhibitor, the PhrA pentapeptide. The RapA dimer forms a stable complex with two molecules of phosphorylated Spo0F. The complex is dissociated after dephosphorylation of Spo0F by RapA. Mn(2+) is required as a cofactor.

It localises to the cytoplasm. With respect to regulation, phosphatase activity is inhibited by the phosphatase regulator PhrA. Interaction with PhrA dissociates the RapA-Spo0F complex. Activity is abolished in the presence of EDTA. Functionally, involved in the regulation of sporulation. Acts as a phosphatase that specifically dephosphorylates the sporulation initiation phosphotransferase Spo0F and inhibits its activity. The polypeptide is Response regulator aspartate phosphatase A (Bacillus subtilis (strain 168)).